Here is a 563-residue protein sequence, read N- to C-terminus: Putative inactive polypeptide N-acetylgalactosaminyltransferase 12 (563 aa).

Topologically, residues 1–6 (MEVFAS) are cytoplasmic. A helical; Signal-anchor for type II membrane protein membrane pass occupies residues 7–29 (VLNCCFKYIVLPVWIFIVLLLLH). The Lumenal portion of the chain corresponds to 30–563 (RDLSSWDGLM…SVMQSANILV (534 aa)). Asn-50 carries an N-linked (GlcNAc...) asparagine glycan. Cys-97 and Cys-334 are disulfide-bonded. The interval 109 to 225 (MKPASIIMIF…NGWLSPLLDT (117 aa)) is catalytic subdomain A. Residues 280–342 (PYEVAAVRTS…PCSRVGHLQP (63 aa)) are catalytic subdomain B. N-linked (GlcNAc...) asparagine glycans are attached at residues Asn-389 and Asn-428. Residues 433–549 (ASGHVKTLEF…ANGKQRWILD (117 aa)) enclose the Ricin B-type lectin domain. A disulfide bond links Cys-446 and Cys-461. N-linked (GlcNAc...) asparagine glycosylation is found at Asn-464 and Asn-469. 2 cysteine pairs are disulfide-bonded: Cys-485-Cys-499 and Cys-523-Cys-537. An N-linked (GlcNAc...) asparagine glycan is attached at Asn-552.

This sequence belongs to the glycosyltransferase 2 family. GalNAc-T subfamily.

It localises to the golgi apparatus membrane. In terms of biological role, probable inactive glycosyltransferase. This chain is Putative inactive polypeptide N-acetylgalactosaminyltransferase 12 (pgant12), found in Drosophila melanogaster (Fruit fly).